Here is a 251-residue protein sequence, read N- to C-terminus: Ubiquinone/menaquinone biosynthesis C-methyltransferase UbiE (251 aa).

Residues Thr-74, Asp-95, 123–124 (NA), and Ser-140 contribute to the S-adenosyl-L-methionine site.

The protein belongs to the class I-like SAM-binding methyltransferase superfamily. MenG/UbiE family.

It carries out the reaction a 2-demethylmenaquinol + S-adenosyl-L-methionine = a menaquinol + S-adenosyl-L-homocysteine + H(+). It catalyses the reaction a 2-methoxy-6-(all-trans-polyprenyl)benzene-1,4-diol + S-adenosyl-L-methionine = a 5-methoxy-2-methyl-3-(all-trans-polyprenyl)benzene-1,4-diol + S-adenosyl-L-homocysteine + H(+). It functions in the pathway quinol/quinone metabolism; menaquinone biosynthesis; menaquinol from 1,4-dihydroxy-2-naphthoate: step 2/2. It participates in cofactor biosynthesis; ubiquinone biosynthesis. In terms of biological role, methyltransferase required for the conversion of demethylmenaquinol (DMKH2) to menaquinol (MKH2) and the conversion of 2-polyprenyl-6-methoxy-1,4-benzoquinol (DDMQH2) to 2-polyprenyl-3-methyl-6-methoxy-1,4-benzoquinol (DMQH2). In Salmonella arizonae (strain ATCC BAA-731 / CDC346-86 / RSK2980), this protein is Ubiquinone/menaquinone biosynthesis C-methyltransferase UbiE.